A 249-amino-acid chain; its full sequence is U2 small nuclear ribonucleoprotein A' (249 aa).

4 LRR repeats span residues 20 to 41 (KERE…GATE), 43 to 64 (QFDT…PYLN), 65 to 87 (RLGT…GEFL), and 89 to 110 (KLHS…DPLA). Residues 123 to 161 (NNITKKANYRLYVIHKLKSLRVLDFIKIKAKERAEAASL) form the LRRCT domain.

It belongs to the U2 small nuclear ribonucleoprotein A family.

The protein resides in the nucleus. Its subcellular location is the nucleus speckle. In terms of biological role, this protein is associated with sn-RNP U2. It helps the A' protein to bind stem loop IV of U2 snRNA. The protein is U2 small nuclear ribonucleoprotein A' of Arabidopsis thaliana (Mouse-ear cress).